The chain runs to 119 residues: Large ribosomal subunit protein uL18 (119 aa).

Belongs to the universal ribosomal protein uL18 family. In terms of assembly, part of the 50S ribosomal subunit; part of the 5S rRNA/L5/L18/L25 subcomplex. Contacts the 5S and 23S rRNAs.

This is one of the proteins that bind and probably mediate the attachment of the 5S RNA into the large ribosomal subunit, where it forms part of the central protuberance. The polypeptide is Large ribosomal subunit protein uL18 (Nitrosomonas europaea (strain ATCC 19718 / CIP 103999 / KCTC 2705 / NBRC 14298)).